A 982-amino-acid chain; its full sequence is Dual specificity protein kinase Ttk (982 aa).

3 disordered regions span residues 178–204 (LSHEDKENLSVSALDHTQGSRRSDGTC), 211–230 (TFLHSDQKFSPQEENGPVWR), and 493–574 (AEHQ…PLRL). Positions 211–223 (TFLHSDQKFSPQE) are enriched in polar residues. The span at 510–533 (MKREENPVKAPEDHQKPFSKETSS) shows a compositional bias: basic and acidic residues. Residues 653–916 (FFIFKMIGRG…IAELLDHPYL (264 aa)) enclose the Protein kinase domain. ATP is bound by residues 659-667 (IGRGGSSKV) and K681. The Proton acceptor role is filled by D775.

Belongs to the protein kinase superfamily. Ser/Thr protein kinase family. The cofactor is Mg(2+). Barely detectable in adult somatic tissues. Expressed in immature germ cells that have not completed meiosis. In ovary, expressed predominantly in previtellogenic oocytes. In testis, expressed in primary and secondary spermatocytes, but not mature spermatozoa.

The enzyme catalyses L-seryl-[protein] + ATP = O-phospho-L-seryl-[protein] + ADP + H(+). It carries out the reaction L-threonyl-[protein] + ATP = O-phospho-L-threonyl-[protein] + ADP + H(+). It catalyses the reaction L-tyrosyl-[protein] + ATP = O-phospho-L-tyrosyl-[protein] + ADP + H(+). In terms of biological role, involved in mitotic spindle assembly checkpoint signaling, a process that delays anaphase until chromosomes are bioriented on the spindle, and in the repair of incorrect mitotic kinetochore-spindle microtubule attachments. Required to prevent chromosome segregation errors during meiosis. Required for fin and heart regeneration. The protein is Dual specificity protein kinase Ttk (ttk) of Danio rerio (Zebrafish).